The primary structure comprises 114 residues: Fluoride-specific ion channel FluC 1 (114 aa).

3 helical membrane-spanning segments follow: residues 23 to 43 (ATLT…SYVF), 52 to 72 (LSTA…TLSV), and 84 to 104 (FLAM…SHLG). Na(+) contacts are provided by Gly62 and Thr65.

Belongs to the fluoride channel Fluc/FEX (TC 1.A.43) family.

Its subcellular location is the cell membrane. The enzyme catalyses fluoride(in) = fluoride(out). Na(+) is not transported, but it plays an essential structural role and its presence is essential for fluoride channel function. Functionally, fluoride-specific ion channel. Important for reducing fluoride concentration in the cell, thus reducing its toxicity. The sequence is that of Fluoride-specific ion channel FluC 1 from Desulfitobacterium hafniense (strain Y51).